A 149-amino-acid polypeptide reads, in one-letter code: Transcriptional regulator MraZ (149 aa).

2 consecutive SpoVT-AbrB domains span residues 9–52 (AYSY…PRAQ) and 82–125 (AQEV…DRAR).

The protein belongs to the MraZ family. In terms of assembly, forms oligomers.

Its subcellular location is the cytoplasm. It localises to the nucleoid. The protein is Transcriptional regulator MraZ of Treponema pallidum subsp. pallidum (strain SS14).